Here is a 207-residue protein sequence, read N- to C-terminus: Vascular endothelial growth factor B (207 aa).

Positions 1–21 are cleaved as a signal peptide; sequence MSPLLRRLLLAALLQLAPAQA. 3 disulfides stabilise this stretch: C47-C89, C78-C122, and C82-C124. Residues 122-139 are compositionally biased toward basic and acidic residues; it reads CECRPKKKDSAVKPDRAA. The tract at residues 122 to 207 is disordered; it reads CECRPKKKDS…AASSVAKGGA (86 aa). Low complexity predominate over residues 174-207; the sequence is PSAHAAPSTTSALTPGPAAAAADAAASSVAKGGA.

The protein belongs to the PDGF/VEGF growth factor family. Homodimer; disulfide-linked. Can also form heterodimer with VEGF. In terms of processing, VEGF-B186 is O-glycosylated. In terms of tissue distribution, expressed in all tissues except liver. Highest levels found in heart, skeletal muscle and pancreas.

The protein localises to the secreted. Functionally, growth factor for endothelial cells. VEGF-B167 binds heparin and neuropilin-1 whereas the binding to neuropilin-1 of VEGF-B186 is regulated by proteolysis. In Homo sapiens (Human), this protein is Vascular endothelial growth factor B (VEGFB).